A 159-amino-acid chain; its full sequence is LOB domain-containing protein 25 (159 aa).

The 102-residue stretch at 38 to 139 (SPCAACKFLR…RELEETNADL (102 aa)) folds into the LOB domain.

It belongs to the LOB domain-containing protein family. In terms of tissue distribution, expressed in young shoots, roots, stems, leaves and flowers.

This Arabidopsis thaliana (Mouse-ear cress) protein is LOB domain-containing protein 25 (LBD25).